The chain runs to 71 residues: Large ribosomal subunit protein uL29 (71 aa).

It belongs to the universal ribosomal protein uL29 family.

In Rickettsia africae (strain ESF-5), this protein is Large ribosomal subunit protein uL29.